A 622-amino-acid polypeptide reads, in one-letter code: Sodium-dependent serotonin transporter (622 aa).

Residues 1–53 are disordered; that stretch reads MDRSGSSDFAGAAATTGRSNPAPWSDDKESPNNEDDSNEDDGDHTTPAKVTDP. At 1–82 the chain is on the cytoplasmic side; that stretch reads MDRSGSSDFA…TRETWGQKAE (82 aa). Acidic residues predominate over residues 32–42; it reads NNEDDSNEDDG. 3 consecutive transmembrane segments (helical) span residues 83–103, 111–130, and 155–175; these read FLLAVIGFAVDLGNVWRFPYI, AFLVPYCLFLIFGGLPLFYM, and GVGYAICLIDIYMGMYYNTII. Na(+) contacts are provided by glycine 89, alanine 91, valine 92, and asparagine 96. Residues 176 to 244 lie on the Extracellular side of the membrane; the sequence is GWAVYYLFAS…NGLDFMGPVK (69 aa). Cysteine 195 and cysteine 204 are oxidised to a cystine. A glycan (N-linked (GlcNAc...) asparagine) is linked at asparagine 211. 5 consecutive transmembrane segments (helical) span residues 245-263, 272-289, 325-342, 354-375, and 408-427; these read PTLALCVFGVFVLVYFSLW, VVWVTALAPYVVLIILLV, IFFSLGPGFGTLLALSSY, LITSSINCLTSFLAGFVIFSVL, and MSGSVFWSIIFFLMLITLGL. Residues serine 328, asparagine 360, leucine 425, aspartate 428, and serine 429 each contribute to the Na(+) site. The next 4 helical transmembrane spans lie at 455–473, 489–509, 530–549, and 568–586; these read LFVLLLLAFIFLCALPTMT, GLAILFVVFVEAAGVFWFYGV, ICWTYISPVFLLTIFIFSIM, and VGWAVTCSSVLCIPMYIIY. Residues 587 to 622 lie on the Cytoplasmic side of the membrane; sequence KFFFASKGGCRQRLQESFQPEDNCGSVVPGQQGTSV.

It belongs to the sodium:neurotransmitter symporter (SNF) (TC 2.A.22) family. Expression is specific to cell bodies in the ventral ganglion of the embryonic and larval nervous system.

It is found in the cell membrane. Its function is as follows. Terminates the action of serotonin by its high affinity sodium-dependent reuptake into presynaptic terminals. The polypeptide is Sodium-dependent serotonin transporter (SerT) (Drosophila melanogaster (Fruit fly)).